We begin with the raw amino-acid sequence, 112 residues long: Mediator of RNA polymerase II transcription subunit 22 (112 aa).

The disordered stretch occupies residues 83–112 (KPEDGGEGQLADELLDKIEDTSDGVDKETA). Residues 96–112 (LLDKIEDTSDGVDKETA) show a composition bias toward basic and acidic residues.

This sequence belongs to the Mediator complex subunit 22 family. As to quaternary structure, component of the Mediator complex.

It is found in the nucleus. Functionally, component of the Mediator complex, a coactivator involved in the regulated transcription of nearly all RNA polymerase II-dependent genes. Mediator functions as a bridge to convey information from gene-specific regulatory proteins to the basal RNA polymerase II transcription machinery. Mediator is recruited to promoters by direct interactions with regulatory proteins and serves as a scaffold for the assembly of a functional preinitiation complex with RNA polymerase II and the general transcription factors. In Yarrowia lipolytica (strain CLIB 122 / E 150) (Yeast), this protein is Mediator of RNA polymerase II transcription subunit 22 (SRB6).